The sequence spans 200 residues: NAD(P)H dehydrogenase (quinone) (200 aa).

In terms of domain architecture, Flavodoxin-like spans 4-190 (VLVLYYSTYG…EGARFQGRHV (187 aa)). Residues 10 to 15 (STYGHV) and 78 to 80 (TRY) contribute to the FMN site. Tyr12 provides a ligand contact to NAD(+). Trp98 is a binding site for substrate. FMN is bound by residues 113–119 (STASQHG) and His134.

Belongs to the WrbA family. The cofactor is FMN.

It carries out the reaction a quinone + NADH + H(+) = a quinol + NAD(+). The enzyme catalyses a quinone + NADPH + H(+) = a quinol + NADP(+). The protein is NAD(P)H dehydrogenase (quinone) of Methylobacterium radiotolerans (strain ATCC 27329 / DSM 1819 / JCM 2831 / NBRC 15690 / NCIMB 10815 / 0-1).